Reading from the N-terminus, the 492-residue chain is MEETPRSVGEASTTNFVAARPSAKTDDAVTMRGCGFANLALVGIDKEELRGRLAMPEYLRIAMRDCIKRKDSTEISDHLLLPGGAAADMAPHAPMVVFINPKSGGRHGPVLKERLQQLMTEEQVFDLTEVKPHEFVRYGLGCLDTLAAKGDECARECREKIRIMVAGGDGTVGWVLGCLGELHKDGKSHIPPVGVIPLGTGNDLSRSFSWGGSFPFAWRSAMKRTLHRATLGSIARLDSWKIVVSMPSGEVVDPPYSLKPTIEETALDQALDADGDVPPKAKSYEGVFYNYFSIGMDAQVAYGFHHLRNEKPYLAQGPVTNKIIYSSYSCTQGWFCTPCVNNPALRGLRNIMKIHIKKANCSEWEEIHVPKSVRSIVVLNLYNYGSGRHPWGNLRPKYLEKRGFVEAHCDDGLIEIFGLKQGWHASFVMAEIISAKHIAQAAAIRFELRGGDWKNAFLQMDGEPWKQPMKSDYSTFVEIKKVPFQSLMINGE.

The region spanning Ala-90–Ser-248 is the DAGKc domain.

Belongs to the eukaryotic diacylglycerol kinase family. In terms of assembly, monomer. Highly expressed in flowers, and at low levels in roots, stems and leaves.

It carries out the reaction a 1,2-diacyl-sn-glycerol + ATP = a 1,2-diacyl-sn-glycero-3-phosphate + ADP + H(+). Phosphorylates the second messenger diacylglycerol (DAG) to generate phosphatidic acid (PA), another important signaling molecule. PA is required for plant development and responses to abiotic stress and pathogen attack. May be involved in the accumulation of PA during cold stress xhibits high specificity for 1,2-dioleoyl-sn-glycerol (1,2-DOG), 1-palmitoyl, 2-oleoyl-sn-glycerol (1,2 POG), 1-stearoyl, 2-linoleoyl-sn-glycerol (1,2-SLG) and 1-oleoyl, 2-palmitoyl-sn-glycerol (1,2-OPG). The protein is Diacylglycerol kinase 7 (DGK7) of Arabidopsis thaliana (Mouse-ear cress).